The following is an 891-amino-acid chain: Echinoderm microtubule-associated protein-like elp-1 (891 aa).

Over residues 77 to 88 (DQSRSPTCSGYS) the composition is skewed to polar residues. The disordered stretch occupies residues 77 to 167 (DQSRSPTCSG…ARGSPMRKWV (91 aa)). A compositionally biased stretch (low complexity) spans 104–117 (SPSHAPPRSSHANS). The segment covering 118–131 (KSLYINGMNNNSEE) has biased composition (polar residues). WD repeat units lie at residues 330-401 (GHTC…TLMV), 404-447 (GFEK…REGE), 499-537 (DKPK…TTKQ), 541-579 (VHPG…RTRR), 626-664 (GDPG…VEFS), 708-747 (EGTA…NLLV), 753-792 (HIPA…CDGT), 816-853 (SSNG…VTAG), and 859-890 (GHGR…EWCL).

It belongs to the WD repeat EMAP family.

It localises to the cytoplasm. It is found in the cytoskeleton. May modify the assembly dynamics of microtubules, such that microtubules are slightly longer, but more dynamic. The chain is Echinoderm microtubule-associated protein-like elp-1 (elp-1) from Caenorhabditis elegans.